Consider the following 221-residue polypeptide: NEDD4 family-interacting protein 1 (221 aa).

Alanine 2 carries the post-translational modification N-acetylalanine. Positions alanine 2–proline 41 are interaction with UBE2L3. At alanine 2–glycine 116 the chain is on the cytoplasmic side. The disordered stretch occupies residues arginine 18–isoleucine 45. 3 short sequence motifs (PPxY motif) span residues proline 39–tyrosine 42, proline 64–tyrosine 67, and proline 74–tyrosine 76. An interaction with ITCH region spans residues tyrosine 42–tyrosine 76. Residues isoleucine 117–phenylalanine 137 traverse the membrane as a helical segment. The Extracellular portion of the chain corresponds to cysteine 138–alanine 143. Residues alanine 144–valine 164 traverse the membrane as a helical segment. Topologically, residues arginine 165–glycine 172 are cytoplasmic. A helical transmembrane segment spans residues tyrosine 173–leucine 193. The Extracellular portion of the chain corresponds to arginine 194–tyrosine 221.

In terms of assembly, forms heterodimers with NDFIP2. Interacts with several E3 ubiquitin-protein ligases, including ITCH, NEDD4, NEDD4L and WWP2. The interaction with NEDD4, NEDD4L and ITCH leads to relocalization of these proteins to exosomes and eventually to exosomal secretion. Interacts with U2SURP. Interacts with SLC11A2/DMT1. Interacts with PTEN. May interact with phosphorylated EGFR. Interacts with BRAT1. Interacts with KCNH2. Interacts with MAVS. Part of a complex containing ITCH, NDFIP1 and MAP3K7. Interacts (via N-terminus) with UBE2L3; the interaction mediates recruitment of UBE2L3 to ITCH. Post-translationally, ubiquitinated by NEDD4 and ITCH; mono-, di- and polyubiquitinated forms are detected. Ubiquitination regulates its degradation. Undergoes transient tyrosine phosphorylation following EGF stimulation, most probably by catalyzed by SRC. Phosphorylation SRC is enhanced in the presence of NDFIP2 which may act as a scaffold to recruit SRC to NDFIP1. Widely expressed. Higher levels are detected in cerebellum, pituitary, thalamus, kidney, liver, testis, salivary glands and placenta. Also expressed in fetal brain, kidney and lung.

The protein localises to the endosome membrane. It is found in the golgi apparatus membrane. The protein resides in the synapse. It localises to the synaptosome. Its subcellular location is the cell projection. The protein localises to the dendrite. It is found in the secreted. Its function is as follows. Activates HECT domain-containing E3 ubiquitin-protein ligases, including NEDD4 and ITCH, and consequently modulates the stability of their targets. As a result, controls many cellular processes. Prevents chronic T-helper cell-mediated inflammation by activating ITCH and thus controlling JUNB degradation. Promotes pancreatic beta cell death through degradation of JUNB and inhibition of the unfolded protein response, leading to reduction of insulin secretion. Restricts the production of pro-inflammatory cytokines in effector Th17 T-cells by promoting ITCH-mediated ubiquitination and degradation of RORC. Together with NDFIP2, limits the cytokine signaling and expansion of effector Th2 T-cells by promoting degradation of JAK1, probably by ITCH- and NEDD4L-mediated ubiquitination. Regulates peripheral T-cell tolerance to self and foreign antigens, forcing the exit of naive CD4+ T-cells from the cell cycle before they become effector T-cells. Negatively regulates RLR-mediated antiviral response by promoting SMURF1-mediated ubiquitination and subsequent degradation of MAVS. Negatively regulates KCNH2 potassium channel activity by decreasing its cell-surface expression and interfering with channel maturation through recruitment of NEDD4L to the Golgi apparatus where it mediates KCNH2 degradation. In cortical neurons, mediates the ubiquitination of the divalent metal transporter SLC11A2/DMT1 by NEDD4L, leading to its down-regulation and protection of the cells from cobalt and iron toxicity. Important for normal development of dendrites and dendritic spines in cortex. Enhances the ubiquitination of BRAT1 mediated by: NEDD4, NEDD4L and ITCH and is required for the nuclear localization of ubiquitinated BRAT1. Enhances the ITCH-mediated ubiquitination of MAP3K7 by recruiting E2 ubiquitin-conjugating enzyme UBE2L3 to ITCH. Modulates EGFR signaling through multiple pathways. In particular, may regulate the ratio of AKT1-to-MAPK8 signaling in response to EGF, acting on AKT1 probably through PTEN destabilization and on MAPK8 through ITCH-dependent MAP2K4 inactivation. As a result, may control cell growth rate. Inhibits cell proliferation by promoting PTEN nuclear localization and changing its signaling specificity. The sequence is that of NEDD4 family-interacting protein 1 (NDFIP1) from Homo sapiens (Human).